Consider the following 551-residue polypeptide: Terpene synthase 10 (551 aa).

Mg(2+) is bound by residues Asp303, Asp307, and Glu455. The DDXXD motif signature appears at 303-307 (DDIYD).

Belongs to the terpene synthase family. The cofactor is Mg(2+).

Functionally, catalyzes the cyclization of farnesyl diphosphate to sesquiterpene olefins. The polypeptide is Terpene synthase 10 (TPS10) (Ricinus communis (Castor bean)).